We begin with the raw amino-acid sequence, 214 residues long: Putative 3-methyladenine DNA glycosylase (214 aa).

The protein belongs to the DNA glycosylase MPG family.

The protein is Putative 3-methyladenine DNA glycosylase of Mycobacterium leprae (strain Br4923).